Consider the following 340-residue polypeptide: Guanine nucleotide-binding protein G(I)/G(S)/G(T) subunit beta-1 (340 aa).

Position 2 is an N-acetylserine (serine 2). At serine 2 the chain carries Phosphoserine. 7 WD repeats span residues arginine 46–proline 94, leucine 95–alanine 140, glycine 141–threonine 181, glycine 182–threonine 223, glycine 224–aspartate 267, asparagine 268–alanine 309, and glycine 310–asparagine 340. A Phosphohistidine modification is found at histidine 266.

Belongs to the WD repeat G protein beta family. G proteins are composed of 3 units, alpha, beta and gamma. The heterodimer formed by GNB1 and GNG2 interacts with ARHGEF5. The heterodimer formed by GNB1 and GNG2 interacts with GRK2. Forms a complex with GNAO1 and GNG3. Interacts with ARHGEF18 and RASD2. Forms complexes with TAS2R14 and G-proteins; these complexes play a role in the perception of bitterness. Component of the TAS2R14-GNAI1 complex, consisting of TAS2R14, GNAI1, GNB1 and GNG2. Component of the TAS2R14-GNAT3 complex, consisting of TAS2R14, GNAT3, GNB1 and GNG2. Component of the TAS2R14-GNAS2 complex, consisting of TAS2R14, GNAS2, GNB1 and GNG2. Post-translationally, phosphorylation at His-266 by NDKB contributes to G protein activation by increasing the high energetic phosphate transfer onto GDP.

In terms of biological role, guanine nucleotide-binding proteins (G proteins) are involved as a modulator or transducer in various transmembrane signaling systems. The beta and gamma chains are required for the GTPase activity, for replacement of GDP by GTP, and for G protein-effector interaction. This is Guanine nucleotide-binding protein G(I)/G(S)/G(T) subunit beta-1 (GNB1) from Bos taurus (Bovine).